Consider the following 131-residue polypeptide: Ribosome-binding factor A (131 aa).

The protein belongs to the RbfA family. In terms of assembly, monomer. Binds 30S ribosomal subunits, but not 50S ribosomal subunits or 70S ribosomes.

It is found in the cytoplasm. One of several proteins that assist in the late maturation steps of the functional core of the 30S ribosomal subunit. Associates with free 30S ribosomal subunits (but not with 30S subunits that are part of 70S ribosomes or polysomes). Required for efficient processing of 16S rRNA. May interact with the 5'-terminal helix region of 16S rRNA. This chain is Ribosome-binding factor A, found in Christiangramia forsetii (strain DSM 17595 / CGMCC 1.15422 / KT0803) (Gramella forsetii).